The primary structure comprises 435 residues: NADH-quinone oxidoreductase subunit D 2 (435 aa).

Belongs to the complex I 49 kDa subunit family. In terms of assembly, NDH-1 is composed of 14 different subunits. Subunits NuoB, C, D, E, F, and G constitute the peripheral sector of the complex.

The protein resides in the cell inner membrane. The enzyme catalyses a quinone + NADH + 5 H(+)(in) = a quinol + NAD(+) + 4 H(+)(out). Its function is as follows. NDH-1 shuttles electrons from NADH, via FMN and iron-sulfur (Fe-S) centers, to quinones in the respiratory chain. The immediate electron acceptor for the enzyme in this species is believed to be ubiquinone. Couples the redox reaction to proton translocation (for every two electrons transferred, four hydrogen ions are translocated across the cytoplasmic membrane), and thus conserves the redox energy in a proton gradient. The protein is NADH-quinone oxidoreductase subunit D 2 of Stenotrophomonas maltophilia (strain R551-3).